We begin with the raw amino-acid sequence, 71 residues long: Large ribosomal subunit protein bL31 (71 aa).

Positions 16, 18, 37, and 40 each coordinate Zn(2+).

Belongs to the bacterial ribosomal protein bL31 family. Type A subfamily. Part of the 50S ribosomal subunit. Zn(2+) is required as a cofactor.

Binds the 23S rRNA. In Pseudomonas putida (strain GB-1), this protein is Large ribosomal subunit protein bL31.